Reading from the N-terminus, the 257-residue chain is NAD-dependent protein deacylase (257 aa).

A Deacetylase sirtuin-type domain is found at 1–252 (MLGHAAKLLA…LRRVKDIMAE (252 aa)). 20–39 (GAGISAESGIPTFRGRNGLW) lines the NAD(+) pocket. 2 residues coordinate substrate: Tyr-64 and Arg-67. 98–101 (QNVD) provides a ligand contact to NAD(+). The active-site Proton acceptor is the His-116. Positions 124, 127, 151, and 154 each coordinate Zn(2+). NAD(+) is bound by residues 191 to 193 (GTS), 217 to 219 (NVE), and Ala-235.

Belongs to the sirtuin family. Class III subfamily. Zn(2+) serves as cofactor.

It localises to the cytoplasm. It catalyses the reaction N(6)-acetyl-L-lysyl-[protein] + NAD(+) + H2O = 2''-O-acetyl-ADP-D-ribose + nicotinamide + L-lysyl-[protein]. The catalysed reaction is N(6)-succinyl-L-lysyl-[protein] + NAD(+) + H2O = 2''-O-succinyl-ADP-D-ribose + nicotinamide + L-lysyl-[protein]. Its function is as follows. NAD-dependent lysine deacetylase and desuccinylase that specifically removes acetyl and succinyl groups on target proteins. Modulates the activities of several proteins which are inactive in their acylated form. Deacetylates the N-terminal lysine residue of Alba, the major archaeal chromatin protein and that, in turn, increases Alba's DNA binding affinity, thereby repressing transcription. The chain is NAD-dependent protein deacylase from Thermococcus kodakarensis (strain ATCC BAA-918 / JCM 12380 / KOD1) (Pyrococcus kodakaraensis (strain KOD1)).